Reading from the N-terminus, the 120-residue chain is Phosphoribosyl-AMP cyclohydrolase (120 aa).

Position 74 (Asp74) interacts with Mg(2+). Cys75 provides a ligand contact to Zn(2+). Asp76 and Asp78 together coordinate Mg(2+). 2 residues coordinate Zn(2+): Cys91 and Cys98.

Belongs to the PRA-CH family. Homodimer. Mg(2+) is required as a cofactor. Zn(2+) serves as cofactor.

It is found in the cytoplasm. It carries out the reaction 1-(5-phospho-beta-D-ribosyl)-5'-AMP + H2O = 1-(5-phospho-beta-D-ribosyl)-5-[(5-phospho-beta-D-ribosylamino)methylideneamino]imidazole-4-carboxamide. The protein operates within amino-acid biosynthesis; L-histidine biosynthesis; L-histidine from 5-phospho-alpha-D-ribose 1-diphosphate: step 3/9. Functionally, catalyzes the hydrolysis of the adenine ring of phosphoribosyl-AMP. The polypeptide is Phosphoribosyl-AMP cyclohydrolase (Natronomonas pharaonis (strain ATCC 35678 / DSM 2160 / CIP 103997 / JCM 8858 / NBRC 14720 / NCIMB 2260 / Gabara) (Halobacterium pharaonis)).